Consider the following 115-residue polypeptide: uncharacterized protein (115 aa).

The MSP domain maps to 1–115 (MGVEISLDPP…ETVIKLSAAE (115 aa)).

This is an uncharacterized protein from Caenorhabditis elegans.